Here is a 351-residue protein sequence, read N- to C-terminus: Nicotinate-nucleotide--dimethylbenzimidazole phosphoribosyltransferase (351 aa).

Glutamate 317 acts as the Proton acceptor in catalysis.

Belongs to the CobT family.

The enzyme catalyses 5,6-dimethylbenzimidazole + nicotinate beta-D-ribonucleotide = alpha-ribazole 5'-phosphate + nicotinate + H(+). It participates in nucleoside biosynthesis; alpha-ribazole biosynthesis; alpha-ribazole from 5,6-dimethylbenzimidazole: step 1/2. Its function is as follows. Catalyzes the synthesis of alpha-ribazole-5'-phosphate from nicotinate mononucleotide (NAMN) and 5,6-dimethylbenzimidazole (DMB). The sequence is that of Nicotinate-nucleotide--dimethylbenzimidazole phosphoribosyltransferase from Bradyrhizobium sp. (strain ORS 278).